A 199-amino-acid polypeptide reads, in one-letter code: Protein GrpE (199 aa).

Residues 1–10 (MTNQTEKEQV) are compositionally biased toward basic and acidic residues. Residues 1–44 (MTNQTEKEQVEQDVSQATELAQEAQEAQTQDVEPELQQNNEIDP) are disordered. Over residues 16–30 (QATELAQEAQEAQTQ) the composition is skewed to low complexity.

This sequence belongs to the GrpE family. As to quaternary structure, homodimer.

It localises to the cytoplasm. Its function is as follows. Participates actively in the response to hyperosmotic and heat shock by preventing the aggregation of stress-denatured proteins, in association with DnaK and GrpE. It is the nucleotide exchange factor for DnaK and may function as a thermosensor. Unfolded proteins bind initially to DnaJ; upon interaction with the DnaJ-bound protein, DnaK hydrolyzes its bound ATP, resulting in the formation of a stable complex. GrpE releases ADP from DnaK; ATP binding to DnaK triggers the release of the substrate protein, thus completing the reaction cycle. Several rounds of ATP-dependent interactions between DnaJ, DnaK and GrpE are required for fully efficient folding. The polypeptide is Protein GrpE (Glaesserella parasuis serovar 5 (strain SH0165) (Haemophilus parasuis)).